Here is a 118-residue protein sequence, read N- to C-terminus: Probable mitochondrial pyruvate carrier 2 (118 aa).

The next 3 membrane-spanning stretches (helical) occupy residues 19-35 (VHFW…LSGI), 50-66 (YAAL…WSLI), and 72-94 (YFNA…RILV).

Belongs to the mitochondrial pyruvate carrier (MPC) (TC 2.A.105) family. In terms of assembly, the functional 150 kDa pyruvate import complex is a heteromer of mpc1 and mpc2.

The protein localises to the mitochondrion inner membrane. Functionally, mediates the uptake of pyruvate into mitochondria. The protein is Probable mitochondrial pyruvate carrier 2 of Schizosaccharomyces pombe (strain 972 / ATCC 24843) (Fission yeast).